Here is a 154-residue protein sequence, read N- to C-terminus: SsrA-binding protein (154 aa).

This sequence belongs to the SmpB family.

Its subcellular location is the cytoplasm. Functionally, required for rescue of stalled ribosomes mediated by trans-translation. Binds to transfer-messenger RNA (tmRNA), required for stable association of tmRNA with ribosomes. tmRNA and SmpB together mimic tRNA shape, replacing the anticodon stem-loop with SmpB. tmRNA is encoded by the ssrA gene; the 2 termini fold to resemble tRNA(Ala) and it encodes a 'tag peptide', a short internal open reading frame. During trans-translation Ala-aminoacylated tmRNA acts like a tRNA, entering the A-site of stalled ribosomes, displacing the stalled mRNA. The ribosome then switches to translate the ORF on the tmRNA; the nascent peptide is terminated with the 'tag peptide' encoded by the tmRNA and targeted for degradation. The ribosome is freed to recommence translation, which seems to be the essential function of trans-translation. The polypeptide is SsrA-binding protein (Staphylococcus saprophyticus subsp. saprophyticus (strain ATCC 15305 / DSM 20229 / NCIMB 8711 / NCTC 7292 / S-41)).